A 143-amino-acid chain; its full sequence is Peptidyl-prolyl cis-trans isomerase B (143 aa).

One can recognise a PPIase cyclophilin-type domain in the interval 1–143 (MKTGYFLLED…DVMKEVRVEG (143 aa)).

It belongs to the cyclophilin-type PPIase family.

It is found in the cytoplasm. It carries out the reaction [protein]-peptidylproline (omega=180) = [protein]-peptidylproline (omega=0). Inhibited by cyclosporin A (CsA). In terms of biological role, PPIases accelerate the folding of proteins. It catalyzes the cis-trans isomerization of proline imidic peptide bonds in oligopeptides. This Bacillus subtilis (strain 168) protein is Peptidyl-prolyl cis-trans isomerase B (ppiB).